The chain runs to 257 residues: Adenosylcobinamide-GDP ribazoletransferase (257 aa).

The next 6 membrane-spanning stretches (helical) occupy residues 4–24 (AVRGLLLALAFLTRLPVWWLG), 40–60 (VVGLILGILLLALYALLQWFF), 64–84 (FVVQAALLVAAWALVTGLLHL), 116–136 (AAVAVITLALVVKVAALAALL), 140–160 (AALAALLIAPVLGRAAAALLI), and 193–213 (LFVTALAGWAGLAAVLGVVAV).

It belongs to the CobS family. It depends on Mg(2+) as a cofactor.

It is found in the cell inner membrane. The enzyme catalyses alpha-ribazole + adenosylcob(III)inamide-GDP = adenosylcob(III)alamin + GMP + H(+). It catalyses the reaction alpha-ribazole 5'-phosphate + adenosylcob(III)inamide-GDP = adenosylcob(III)alamin 5'-phosphate + GMP + H(+). It functions in the pathway cofactor biosynthesis; adenosylcobalamin biosynthesis; adenosylcobalamin from cob(II)yrinate a,c-diamide: step 7/7. Its function is as follows. Joins adenosylcobinamide-GDP and alpha-ribazole to generate adenosylcobalamin (Ado-cobalamin). Also synthesizes adenosylcobalamin 5'-phosphate from adenosylcobinamide-GDP and alpha-ribazole 5'-phosphate. This chain is Adenosylcobinamide-GDP ribazoletransferase, found in Alkalilimnicola ehrlichii (strain ATCC BAA-1101 / DSM 17681 / MLHE-1).